We begin with the raw amino-acid sequence, 755 residues long: Protein MTSS 1 (755 aa).

Residues 1-250 (MEAVIEKECS…EQVILDLKGS (250 aa)) enclose the IMD domain. A coiled-coil region spans residues 108-155 (LQEQMEEWKKVANQLDKDHAKEYKKARQEIKKKSSDTLKLQKKAKKGR). 2 disordered regions span residues 139–159 (KKSS…GDIQ) and 255–305 (SYQT…RSSN). A Phosphothreonine modification is found at Thr258. Phosphoserine is present on residues Ser261, Ser262, Ser271, and Ser322. Positions 327 to 351 (QDAFQSKSPSPMPPEAPNQLSNGFS) are disordered. At Thr425 the chain carries Phosphothreonine. Disordered regions lie at residues 428 to 470 (RRKE…TRPG), 490 to 513 (DTQR…TTPC), and 563 to 755 (QAKR…PRFS). Residues 443–453 (TTASGPPAAAE) are compositionally biased toward low complexity. At Thr603 the chain carries Phosphothreonine. Residues 608–623 (PIPIKTPVIPVKTPTV) are compositionally biased toward low complexity. Phosphoserine occurs at positions 644 and 647. A compositionally biased stretch (polar residues) spans 656–671 (GVTSMPSSMWSGQASV). Residues 727-744 (QGEDMLNAIRRGVKLKKT) enclose the WH2 domain.

The protein belongs to the MTSS family. Binds to actin. Binds to the cytoplasmic domain of receptor protein tyrosine phosphatase delta. Expressed in many tissues, including spleen, thymus, prostate, testis, uterus, colon, and peripheral blood.

Its subcellular location is the cytoplasm. The protein resides in the cytoskeleton. Its function is as follows. May be related to cancer progression or tumor metastasis in a variety of organ sites, most likely through an interaction with the actin cytoskeleton. This is Protein MTSS 1 from Homo sapiens (Human).